The primary structure comprises 155 residues: Ribosomal RNA large subunit methyltransferase H (155 aa).

S-adenosyl-L-methionine is bound by residues L72, G103, and 122–127 (LSDLTL).

It belongs to the RNA methyltransferase RlmH family. Homodimer.

It is found in the cytoplasm. The catalysed reaction is pseudouridine(1915) in 23S rRNA + S-adenosyl-L-methionine = N(3)-methylpseudouridine(1915) in 23S rRNA + S-adenosyl-L-homocysteine + H(+). Specifically methylates the pseudouridine at position 1915 (m3Psi1915) in 23S rRNA. This Verminephrobacter eiseniae (strain EF01-2) protein is Ribosomal RNA large subunit methyltransferase H.